The following is an 871-amino-acid chain: Translation initiation factor IF-2 (871 aa).

2 disordered regions span residues 60–101 (KKNI…QEVK) and 184–203 (ESLKKKKKEKKSFVASKKES). Residues 61-72 (KNIKTPTAKKPK) are compositionally biased toward basic residues. Over residues 73-101 (KENIKEQEKLNESEKKEPKKEEKLKQEVK) the composition is skewed to basic and acidic residues. Positions 370-537 (TRAPVITIMG…IVLLQADILE (168 aa)) constitute a tr-type G domain. Positions 379 to 386 (GHVDHGKT) are G1. 379–386 (GHVDHGKT) is a binding site for GTP. The G2 stretch occupies residues 404–408 (GITQH). Residues 425–428 (DTPG) form a G3 region. GTP contacts are provided by residues 425-429 (DTPGH) and 479-482 (NKMD). The G4 stretch occupies residues 479 to 482 (NKMD). The G5 stretch occupies residues 515 to 517 (SAK).

It belongs to the TRAFAC class translation factor GTPase superfamily. Classic translation factor GTPase family. IF-2 subfamily.

The protein resides in the cytoplasm. Its function is as follows. One of the essential components for the initiation of protein synthesis. Protects formylmethionyl-tRNA from spontaneous hydrolysis and promotes its binding to the 30S ribosomal subunits. Also involved in the hydrolysis of GTP during the formation of the 70S ribosomal complex. This Campylobacter jejuni subsp. jejuni serotype O:23/36 (strain 81-176) protein is Translation initiation factor IF-2.